Reading from the N-terminus, the 288-residue chain is Shikimate dehydrogenase (NADP(+)) (288 aa).

Residues 18–20 (SRS) and Thr-65 each bind shikimate. The Proton acceptor role is filled by Lys-69. Glu-81 provides a ligand contact to NADP(+). Residues Asn-90 and Asp-106 each coordinate shikimate. NADP(+) is bound by residues 131–135 (GAGGA), 155–160 (NRTLAK), and Met-223. Position 225 (Tyr-225) interacts with shikimate. Gly-246 lines the NADP(+) pocket.

It belongs to the shikimate dehydrogenase family. Homodimer.

It carries out the reaction shikimate + NADP(+) = 3-dehydroshikimate + NADPH + H(+). Its pathway is metabolic intermediate biosynthesis; chorismate biosynthesis; chorismate from D-erythrose 4-phosphate and phosphoenolpyruvate: step 4/7. Involved in the biosynthesis of the chorismate, which leads to the biosynthesis of aromatic amino acids. Catalyzes the reversible NADPH linked reduction of 3-dehydroshikimate (DHSA) to yield shikimate (SA). The chain is Shikimate dehydrogenase (NADP(+)) from Verminephrobacter eiseniae (strain EF01-2).